Consider the following 268-residue polypeptide: Fibroblast growth factor 8 (268 aa).

The N-terminal stretch at 1–22 is a signal peptide; sequence MGSPRSALSCLLLHLLVLCLQA. Gln-23 is subject to Pyrrolidone carboxylic acid. The interval 29 to 87 is disordered; the sequence is QKRGPGAGNPADTLGQGHEDRPFGQRSRAGKNFTNPAPNYPEEGSKEQRDSVLPKVTQR. An N-linked (GlcNAc...) asparagine glycan is attached at Asn-60. Residues 71–80 show a composition bias toward basic and acidic residues; that stretch reads EGSKEQRDSV. A glycan (N-linked (GlcNAc...) asparagine) is linked at Asn-190.

The protein belongs to the heparin-binding growth factors family. In terms of assembly, monomer. Homodimer. Interacts with FGFR1, FGFR2, FGFR3 and FGFR4. Affinity between fibroblast growth factors (FGFs) and their receptors is increased by heparan sulfate glycosaminoglycans that function as coreceptors. The N-terminus is blocked. In terms of tissue distribution, absent in normal mammary glands and detected only in adult testis and ovary and in midgestational embryos.

The protein resides in the secreted. In terms of biological role, plays an important role in the regulation of embryonic development, cell proliferation, cell differentiation and cell migration. Required for normal brain, eye, ear and limb development during embryogenesis. Required for normal development of the gonadotropin-releasing hormone (GnRH) neuronal system. Plays a role in neurite outgrowth in hippocampal cells. Cooperates with Wnt-1 in mouse mammary tumor virus-induced murine mammary tumorigenesis. The protein is Fibroblast growth factor 8 (Fgf8) of Mus musculus (Mouse).